A 118-amino-acid chain; its full sequence is Small ribosomal subunit protein uS13 (118 aa).

Residues 94–118 (GLPVRGQRTKTNARTRKGPRKPIRK) are disordered.

The protein belongs to the universal ribosomal protein uS13 family. Part of the 30S ribosomal subunit. Forms a loose heterodimer with protein S19. Forms two bridges to the 50S subunit in the 70S ribosome.

Located at the top of the head of the 30S subunit, it contacts several helices of the 16S rRNA. In the 70S ribosome it contacts the 23S rRNA (bridge B1a) and protein L5 of the 50S subunit (bridge B1b), connecting the 2 subunits; these bridges are implicated in subunit movement. Contacts the tRNAs in the A and P-sites. This is Small ribosomal subunit protein uS13 from Pseudomonas aeruginosa (strain LESB58).